A 154-amino-acid polypeptide reads, in one-letter code: SsrA-binding protein (154 aa).

This sequence belongs to the SmpB family.

The protein localises to the cytoplasm. In terms of biological role, required for rescue of stalled ribosomes mediated by trans-translation. Binds to transfer-messenger RNA (tmRNA), required for stable association of tmRNA with ribosomes. tmRNA and SmpB together mimic tRNA shape, replacing the anticodon stem-loop with SmpB. tmRNA is encoded by the ssrA gene; the 2 termini fold to resemble tRNA(Ala) and it encodes a 'tag peptide', a short internal open reading frame. During trans-translation Ala-aminoacylated tmRNA acts like a tRNA, entering the A-site of stalled ribosomes, displacing the stalled mRNA. The ribosome then switches to translate the ORF on the tmRNA; the nascent peptide is terminated with the 'tag peptide' encoded by the tmRNA and targeted for degradation. The ribosome is freed to recommence translation, which seems to be the essential function of trans-translation. The protein is SsrA-binding protein of Treponema pallidum (strain Nichols).